The chain runs to 444 residues: Cell wall mannoprotein PST1 (444 aa).

Residues methionine 1–alanine 19 form the signal peptide. 15 N-linked (GlcNAc...) asparagine glycosylation sites follow: asparagine 57, asparagine 76, asparagine 83, asparagine 86, asparagine 196, asparagine 210, asparagine 228, asparagine 235, asparagine 242, asparagine 263, asparagine 268, asparagine 280, asparagine 292, asparagine 305, and asparagine 329. 2 stretches are compositionally biased toward low complexity: residues serine 359–serine 381 and lysine 395–glycine 418. The tract at residues serine 359–glycine 418 is disordered. Asparagine 419 carries the GPI-anchor amidated asparagine lipid modification. Residues alanine 420–methionine 444 constitute a propeptide, removed in mature form.

The protein belongs to the SPS2 family. Extensively N- and O-mannosylated.

Its subcellular location is the cell membrane. The protein resides in the secreted. It localises to the cell wall. Has a partially redundant function to ECM33 in cell wall integrity. May be involved in a repair mechanism activated in response to cell wall damage. This Saccharomyces cerevisiae (strain ATCC 204508 / S288c) (Baker's yeast) protein is Cell wall mannoprotein PST1 (PST1).